Reading from the N-terminus, the 346-residue chain is MTGQSSSQAATPIQWWKPALFFLVVIAGLWYVKWEPYYGKAFTAAETHSIGKSILAQADANPWQAALDYAMIYFLAVWKAAVLGVILGSLIQVLIPRDWLLRTLGQSRFRGTLLGTLFSLPGMMCTCCAAPVAAGMRRQQVSMGGALAFWMGNPVLNPATLVFMGFVLGWGFAAIRLVAGLVMVLLIATLVQKWVRETPQTQAPVEIDIPEAQGGFFSRWGRALWTLFWSTIPVYILAVLVLGAARVWLFPHADGAVDNSLMWVVAMAVAGCLFVIPTAAEIPIVQTMMLAGMGTAPALALLMTLPAVSLPSLIMLRKAFPAKALWLTGAMVAVSGVIVGGLALLF.

The next 9 helical transmembrane spans lie at 12-32, 71-91, 113-133, 146-166, 167-187, 223-243, 260-280, 296-316, and 326-346; these read PIQW…LWYV, MIYF…GSLI, LLGT…APVA, ALAF…FMGF, VLGW…VLLI, ALWT…LVLG, SLMW…PTAA, APAL…LIML, and WLTG…ALLF.

The protein belongs to the UPF0718 family.

It localises to the cell membrane. This is UPF0718 protein YraQ (yraQ) from Escherichia coli (strain K12).